Here is an 86-residue protein sequence, read N- to C-terminus: Small ribosomal subunit protein bS20 (86 aa).

It belongs to the bacterial ribosomal protein bS20 family.

Binds directly to 16S ribosomal RNA. The sequence is that of Small ribosomal subunit protein bS20 from Pseudarthrobacter chlorophenolicus (strain ATCC 700700 / DSM 12829 / CIP 107037 / JCM 12360 / KCTC 9906 / NCIMB 13794 / A6) (Arthrobacter chlorophenolicus).